The sequence spans 312 residues: Retinol dehydrogenase 8 (312 aa).

9–18 lines the NADP(+) pocket; it reads LISGCSSGIG. The next 3 membrane-spanning stretches (helical) occupy residues 87–107, 138–158, and 170–190; these read VLVNNAGVGLVGPLEGLSLAA, IVVVSSVMGLQGVVFNEVYAA, and LAVQLLQFNIFISLVEPGPVV. A substrate-binding site is contributed by Ser143. Tyr156 serves as the catalytic Proton acceptor.

The protein belongs to the short-chain dehydrogenases/reductases (SDR) family. As to expression, detected in photoreceptor outer segments in the retina (at protein level).

It localises to the membrane. It carries out the reaction all-trans-retinol + NADP(+) = all-trans-retinal + NADPH + H(+). Retinol dehydrogenase with a clear preference for NADP. Converts all-trans-retinal to all-trans-retinol. May play a role in the regeneration of visual pigment at high light intensity. The protein is Retinol dehydrogenase 8 (RDH8) of Bos taurus (Bovine).